Here is a 316-residue protein sequence, read N- to C-terminus: MNNSTALQTLDAILEIYARPFNDLIYAAQQVHRLHFDPNAIQCSTLLSIKTGGCPEDCGYCSQSVHHQTALQAEPLMDLEQVRAAAREAKANGAQRLCMGAAWRSPHDRDIEKVAAMIGVVKEYGLESCVTLGMLKPGQAERLQHAGLDYYNHNLDTSPEFYGEVIHTRSYQDRLDTLEAVRDAGIRICSGGILGMGESRRDRARMLQVLAQLPQAPESIPINALVPIPGTPLEAAEPIDGFEFVRTVAVTRILFPKAYVRLSAGREAMSDELQALAFLAGANSIFLGDRLLTTGNASTGHDQALFNRLGLHRSAD.

The region spanning Asn39–Ser263 is the Radical SAM core domain. Cys54, Cys58, and Cys61 together coordinate [4Fe-4S] cluster. Positions 98, 129, 189, and 261 each coordinate [2Fe-2S] cluster.

The protein belongs to the radical SAM superfamily. Biotin synthase family. As to quaternary structure, homodimer. Requires [4Fe-4S] cluster as cofactor. [2Fe-2S] cluster serves as cofactor.

It carries out the reaction (4R,5S)-dethiobiotin + (sulfur carrier)-SH + 2 reduced [2Fe-2S]-[ferredoxin] + 2 S-adenosyl-L-methionine = (sulfur carrier)-H + biotin + 2 5'-deoxyadenosine + 2 L-methionine + 2 oxidized [2Fe-2S]-[ferredoxin]. It functions in the pathway cofactor biosynthesis; biotin biosynthesis; biotin from 7,8-diaminononanoate: step 2/2. Its function is as follows. Catalyzes the conversion of dethiobiotin (DTB) to biotin by the insertion of a sulfur atom into dethiobiotin via a radical-based mechanism. The polypeptide is Biotin synthase (Acidithiobacillus ferrooxidans (strain ATCC 23270 / DSM 14882 / CIP 104768 / NCIMB 8455) (Ferrobacillus ferrooxidans (strain ATCC 23270))).